Reading from the N-terminus, the 703-residue chain is Elongation factor G (703 aa).

Positions glutamate 9 to leucine 292 constitute a tr-type G domain. GTP-binding positions include alanine 18–threonine 25, aspartate 91–histidine 95, and asparagine 145–aspartate 148.

The protein belongs to the TRAFAC class translation factor GTPase superfamily. Classic translation factor GTPase family. EF-G/EF-2 subfamily.

The protein resides in the cytoplasm. In terms of biological role, catalyzes the GTP-dependent ribosomal translocation step during translation elongation. During this step, the ribosome changes from the pre-translocational (PRE) to the post-translocational (POST) state as the newly formed A-site-bound peptidyl-tRNA and P-site-bound deacylated tRNA move to the P and E sites, respectively. Catalyzes the coordinated movement of the two tRNA molecules, the mRNA and conformational changes in the ribosome. The sequence is that of Elongation factor G from Leuconostoc citreum (strain KM20).